We begin with the raw amino-acid sequence, 411 residues long: Na(+)-translocating NADH-quinone reductase subunit F (411 aa).

Residues 6–26 (AIGGVAMFTLIIMSFVAIILA) form a helical membrane-spanning segment. One can recognise a 2Fe-2S ferredoxin-type domain in the interval 35–129 (GDVTIHINDN…DMKIEIDPEF (95 aa)). 4 residues coordinate [2Fe-2S] cluster: Cys72, Cys78, Cys81, and Cys113. The FAD-binding FR-type domain maps to 132–273 (VQKWECEVIS…SGPYGEFFAK (142 aa)).

Belongs to the NqrF family. As to quaternary structure, composed of six subunits; NqrA, NqrB, NqrC, NqrD, NqrE and NqrF. Requires [2Fe-2S] cluster as cofactor. It depends on FAD as a cofactor.

Its subcellular location is the cell inner membrane. It catalyses the reaction a ubiquinone + n Na(+)(in) + NADH + H(+) = a ubiquinol + n Na(+)(out) + NAD(+). NQR complex catalyzes the reduction of ubiquinone-1 to ubiquinol by two successive reactions, coupled with the transport of Na(+) ions from the cytoplasm to the periplasm. The first step is catalyzed by NqrF, which accepts electrons from NADH and reduces ubiquinone-1 to ubisemiquinone by a one-electron transfer pathway. This Psychrobacter arcticus (strain DSM 17307 / VKM B-2377 / 273-4) protein is Na(+)-translocating NADH-quinone reductase subunit F.